We begin with the raw amino-acid sequence, 444 residues long: Elongation factor 1-alpha (444 aa).

Residues 15 to 236 form the tr-type G domain; that stretch reads KPHINLAVVG…VLDTFQPPPR (222 aa). Residues 24–31 form a G1 region; the sequence is GHVDNGKS. 24-31 is a binding site for GTP; the sequence is GHVDNGKS. Residue Ser-31 coordinates Mg(2+). The segment at 80–84 is G2; the sequence is GVTIE. A G3 region spans residues 101-104; that stretch reads DLPG. GTP-binding positions include 101–105 and 163–166; these read DLPGH and NKMD. The tract at residues 163–166 is G4; that stretch reads NKMD. The interval 202-204 is G5; that stretch reads SAI.

Belongs to the TRAFAC class translation factor GTPase superfamily. Classic translation factor GTPase family. EF-Tu/EF-1A subfamily.

It is found in the cytoplasm. The catalysed reaction is GTP + H2O = GDP + phosphate + H(+). GTP hydrolase that promotes the GTP-dependent binding of aminoacyl-tRNA to the A-site of ribosomes during protein biosynthesis. In Pyrobaculum calidifontis (strain DSM 21063 / JCM 11548 / VA1), this protein is Elongation factor 1-alpha.